We begin with the raw amino-acid sequence, 257 residues long: tRNA dimethylallyltransferase (257 aa).

15-22 is a binding site for ATP; sequence GPTASGKS. 17 to 22 contributes to the substrate binding site; that stretch reads TASGKS.

It belongs to the IPP transferase family. As to quaternary structure, monomer. Mg(2+) serves as cofactor.

The enzyme catalyses adenosine(37) in tRNA + dimethylallyl diphosphate = N(6)-dimethylallyladenosine(37) in tRNA + diphosphate. Catalyzes the transfer of a dimethylallyl group onto the adenine at position 37 in tRNAs that read codons beginning with uridine, leading to the formation of N6-(dimethylallyl)adenosine (i(6)A). The protein is tRNA dimethylallyltransferase of Oenococcus oeni (strain ATCC BAA-331 / PSU-1).